The primary structure comprises 179 residues: Ribosome-recycling factor (179 aa).

This sequence belongs to the RRF family.

Its subcellular location is the cytoplasm. In terms of biological role, responsible for the release of ribosomes from messenger RNA at the termination of protein biosynthesis. May increase the efficiency of translation by recycling ribosomes from one round of translation to another. The sequence is that of Ribosome-recycling factor from Chlamydia muridarum (strain MoPn / Nigg).